Here is a 33-residue protein sequence, read N- to C-terminus: Photosystem II reaction center protein Psb30 (33 aa).

Residues 5–25 traverse the membrane as a helical segment; sequence LIVQLGSLALITVAGPAIIVL.

Belongs to the Psb30/Ycf12 family. PSII is composed of 1 copy each of membrane proteins PsbA, PsbB, PsbC, PsbD, PsbE, PsbF, PsbH, PsbI, PsbJ, PsbK, PsbL, PsbM, PsbT, PsbY, PsbZ, Psb30/Ycf12, peripheral proteins of the oxygen-evolving complex and a large number of cofactors. It forms dimeric complexes.

It localises to the plastid. The protein localises to the chloroplast thylakoid membrane. In terms of biological role, a core subunit of photosystem II (PSII), probably helps stabilize the reaction center. The protein is Photosystem II reaction center protein Psb30 of Euglena stellata.